Reading from the N-terminus, the 357-residue chain is D(4) dopamine receptor (357 aa).

Topologically, residues 1–32 (MGNRSAADADGLLAGRGPGTGGGAGSPGAAAA) are extracellular. The N-linked (GlcNAc...) asparagine glycan is linked to Asn-3. The chain crosses the membrane as a helical span at residues 33-55 (LVGGVLLIGAVLAGNALVCVSVA). Residues 56 to 65 (AERALQTPTN) lie on the Cytoplasmic side of the membrane. A helical transmembrane segment spans residues 66–88 (YFIVSLAAADLLLALLVLPLFVY). Asp-75 serves as a coordination point for Na(+). The Extracellular segment spans residues 89–104 (SEVQGGVWQFSPGLCD). Cys-103 and Cys-180 form a disulfide bridge. A helical membrane pass occupies residues 105-126 (ALMAMDVMLCTASIFNLCAISA). Ser-117 is a binding site for Na(+). Residues 127-146 (DRFVAVAVPLSYNRQSGGGR) are Cytoplasmic-facing. A helical transmembrane segment spans residues 147–170 (QLLLIGATWLLSAAVAAPVLCGLN). Topologically, residues 171 to 186 (DARGRDPAVCRLEDRD) are extracellular. The helical transmembrane segment at 187–208 (YVVYSSVCSFFLPCPVMLLLYW) threads the bilayer. Over 209 to 284 (ATFRGLRRWE…ITGRERKAMR (76 aa)) the chain is Cytoplasmic. Residues 225–261 (LHGRRPRRPSGPGPPPPEAVETPEAPEAIPTPDATLA) form a disordered region. A compositionally biased stretch (pro residues) spans 233–242 (PSGPGPPPPE). Residues 243–259 (AVETPEAPEAIPTPDAT) are compositionally biased toward low complexity. A helical membrane pass occupies residues 285–307 (VLPVVVGAFLVCWTPFFVVHITG). Residues 308–316 (ALCPACAVP) lie on the Extracellular side of the membrane. The cysteines at positions 310 and 313 are disulfide-linked. The chain crosses the membrane as a helical span at residues 317-339 (PRLVSAVTWLGYVNSALNPLIYT). Topologically, residues 340–357 (VFNAEFRAVFRKALRLCC) are cytoplasmic. Cys-357 carries S-palmitoyl cysteine lipidation.

It belongs to the G-protein coupled receptor 1 family. Forms homo- and heterooligomers with DRD2. D4.7 allele exhibits higher affinity for homodimers compared to DRD2 heterodimers, while alleles D42. and 4.4 have similar affinities for both. The interaction with DRD2 may modulate agonist-induced downstream signaling. Interacts with CLIC6. Interacts with GPRASP1. May interact with ADORA2A. Interacts with KLHL12. In terms of processing, polyubiquitinated by the BCR(KLHL12) E3 ubiquitin ligase complex: polyubiquitination does not lead to degradation of DRD4 protein. Palmitoylated. Palmitoylation of the C-terminal Cys is important for normal expression at the cell membrane.

The protein localises to the cell membrane. In terms of biological role, dopamine receptor responsible for neuronal signaling in the mesolimbic system of the brain, an area of the brain that regulates emotion and complex behavior. Activated by dopamine, but also by epinephrine and norepinephrine, and by numerous synthetic agonists and drugs. Agonist binding triggers signaling via G proteins that inhibit adenylyl cyclase. Modulates the circadian rhythm of contrast sensitivity by regulating the rhythmic expression of NPAS2 in the retinal ganglion cells. In Mustela putorius furo (European domestic ferret), this protein is D(4) dopamine receptor (DRD4).